A 256-amino-acid polypeptide reads, in one-letter code: Small ribosomal subunit protein eS1 (256 aa).

Over residues M1–K18 the composition is skewed to basic residues. Residues M1 to T20 are disordered. Residue A2 is modified to N-acetylalanine; partial.

The protein belongs to the eukaryotic ribosomal protein eS1 family. In terms of assembly, component of the small ribosomal subunit. Mature ribosomes consist of a small (40S) and a large (60S) subunit. The 40S subunit contains about 33 different proteins and 1 molecule of RNA (18S). The 60S subunit contains about 49 different proteins and 3 molecules of RNA (25S, 5.8S and 5S).

It localises to the cytoplasm. The protein is Small ribosomal subunit protein eS1 (rps1) of Emericella nidulans (strain FGSC A4 / ATCC 38163 / CBS 112.46 / NRRL 194 / M139) (Aspergillus nidulans).